Reading from the N-terminus, the 730-residue chain is MTENKCPVTGKMSKATAGSGTTNKDWWPNQLNLNILHQNSQLSNPMSKDFNYAEEFKKLDFQALKVDLYMLMTDSQIWWPADYGNYGPFFIRMAWHSAGTYRVGDGRGGGSFGLQRFAPLNSWPDNINLDKARRLLWPIKKKYGNKISWADLMILTGNCALESMGLKTLGFGGGRVDVWEPQEDIYWGSEKEWLGDEREKDDEELENPLAAVQMGLIYVNPEGPNGNPDPLGSAHDVRETFARMAMNDEETVALVAGGHTFGKCHGAASPSYVGPAPEAAPIEEQGLGWKNTYGSGNGDDTIGSGLEGAWKANPTKWTMGYLKTLFKYDWELVKSPAGAYQWLAKNVDEEDMVIDAEDSTKKHRPMMTTADLGLRYDPIYEPIARNYLKNPEKFAHDFAAAWFKLTHRDMGPISRYLGPEVPKESFIWQDPIPLVKHKLITKKDITHIKKKILDSGLSISDLVATAWASASTFRGSDKRGGANGARIRLEPQKNWEVNEPKKLNNVLNTLKQIKENFNSYHSKDKKVSLADIIILGGCVGIEQAAKRAGYNINVPFIPGRTDATQKQTDVKSFAVLEPKGDGFRNYLKTKYVVKPEDMLIDRAQLLTLTAPEMTVLIGGMRVLNCNYNKSKDGVFTNRPECLTNDFFVNLLDMNTVWKPKSEGKDRFEGFDRETGELKWTATRVDLIFGSNSQLRAIAEVYACDDNKEKFIQDFIFAWNKIMNADRFEIK.

The tract at residues 1-21 (MTENKCPVTGKMSKATAGSGT) is disordered. The segment at residues 95-218 (WHSAGTYRVG…LAAVQMGLIY (124 aa)) is a cross-link (tryptophyl-tyrosyl-methioninium (Trp-Tyr) (with M-244)). The active-site Proton acceptor is the His96. Positions 218-244 (YVNPEGPNGNPDPLGSAHDVRETFARM) form a cross-link, tryptophyl-tyrosyl-methioninium (Tyr-Met) (with W-95). His259 contacts heme b.

It belongs to the peroxidase family. Peroxidase/catalase subfamily. In terms of assembly, homodimer or homotetramer. It depends on heme b as a cofactor. Formation of the three residue Trp-Tyr-Met cross-link is important for the catalase, but not the peroxidase activity of the enzyme.

It catalyses the reaction H2O2 + AH2 = A + 2 H2O. It carries out the reaction 2 H2O2 = O2 + 2 H2O. Functionally, bifunctional enzyme with both catalase and broad-spectrum peroxidase activity. This Clostridium botulinum (strain Alaska E43 / Type E3) protein is Catalase-peroxidase.